A 207-amino-acid polypeptide reads, in one-letter code: Ribosomal RNA small subunit methyltransferase G (207 aa).

S-adenosyl-L-methionine-binding positions include Gly75, Leu80, 126 to 127 (VE), and Arg141.

The protein belongs to the methyltransferase superfamily. RNA methyltransferase RsmG family.

It is found in the cytoplasm. It catalyses the reaction guanosine(527) in 16S rRNA + S-adenosyl-L-methionine = N(7)-methylguanosine(527) in 16S rRNA + S-adenosyl-L-homocysteine. In terms of biological role, specifically methylates the N7 position of guanine in position 527 of 16S rRNA. This chain is Ribosomal RNA small subunit methyltransferase G, found in Psychromonas ingrahamii (strain DSM 17664 / CCUG 51855 / 37).